The following is a 421-amino-acid chain: RNase J-like protein (421 aa).

Positions 55, 57, 59, 60, 132, 153, and 389 each coordinate Zn(2+).

This sequence belongs to the metallo-beta-lactamase superfamily. RNA-metabolizing metallo-beta-lactamase-like family. Forms homodimers on heating to 60 degrees Celsius which may be the active form. Zn(2+) is required as a cofactor.

Its activity is regulated as follows. Inhibited by imidazole. In terms of biological role, a 5'-3' exoribonuclease with a strong reference for 5'-monophosphorylated RNA and no endoribonuclease activty. This Methanocaldococcus jannaschii (strain ATCC 43067 / DSM 2661 / JAL-1 / JCM 10045 / NBRC 100440) (Methanococcus jannaschii) protein is RNase J-like protein.